Reading from the N-terminus, the 218-residue chain is Adenylate kinase (218 aa).

10 to 15 is an ATP binding site; sequence GAGKGT. Residues 30–59 are NMP; sequence STGDMLRAAVKAGTPLGLEAKKVMDAGGLV. Residues Thr31, Arg36, 57–59, 85–88, and Gln92 contribute to the AMP site; these read GLV and GFPR. The interval 122–159 is LID; sequence ERRVHPASGRSYHVRFNPPKAEGVDDVTGEPLVQRDDD. ATP-binding positions include Arg123 and 132 to 133; that span reads SY. The AMP site is built by Arg156 and Arg167. Gly203 is a binding site for ATP.

This sequence belongs to the adenylate kinase family. As to quaternary structure, monomer.

It is found in the cytoplasm. The enzyme catalyses AMP + ATP = 2 ADP. Its pathway is purine metabolism; AMP biosynthesis via salvage pathway; AMP from ADP: step 1/1. In terms of biological role, catalyzes the reversible transfer of the terminal phosphate group between ATP and AMP. Plays an important role in cellular energy homeostasis and in adenine nucleotide metabolism. The sequence is that of Adenylate kinase from Bordetella pertussis (strain Tohama I / ATCC BAA-589 / NCTC 13251).